Consider the following 479-residue polypeptide: 3-isopropylmalate dehydratase large subunit (479 aa).

C353, C414, and C417 together coordinate [4Fe-4S] cluster.

The protein belongs to the aconitase/IPM isomerase family. LeuC type 1 subfamily. As to quaternary structure, heterodimer of LeuC and LeuD. [4Fe-4S] cluster serves as cofactor.

The enzyme catalyses (2R,3S)-3-isopropylmalate = (2S)-2-isopropylmalate. It participates in amino-acid biosynthesis; L-leucine biosynthesis; L-leucine from 3-methyl-2-oxobutanoate: step 2/4. Functionally, catalyzes the isomerization between 2-isopropylmalate and 3-isopropylmalate, via the formation of 2-isopropylmaleate. The protein is 3-isopropylmalate dehydratase large subunit of Xanthomonas campestris pv. campestris (strain 8004).